Reading from the N-terminus, the 624-residue chain is E3 ubiquitin-protein ligase RLIM (624 aa).

M1 carries the N-acetylmethionine modification. Residues 1 to 11 (MENSDSNDKGS) show a composition bias toward basic and acidic residues. Disordered regions lie at residues 1–25 (MENS…QMDR), 72–251 (KEGP…SQTF), 257–276 (NETE…QQIS), 291–363 (TRNA…RGGF), and 424–522 (SDSE…TFDE). The span at 104–132 (SVRQTGNTTRSGQRGNQSWRAVSRTNPNS) shows a compositional bias: polar residues. The span at 142-153 (NVNRNNGSQNSE) shows a compositional bias: low complexity. At S164 the chain carries Phosphoserine. The segment covering 165 to 188 (GENVENNSQRQVENPRSESTSARP) has biased composition (polar residues). Residues S195, S228, S230, and S276 each carry the phosphoserine modification. Positions 214–229 (RSPDHRRTRARAERSR) are enriched in basic and acidic residues. Residues 291-315 (TRNASQGAGSSDTAASGESTGSGQR) show a composition bias toward polar residues. Positions 329 to 339 (RPGEYRQRDSI) are enriched in basic and acidic residues. Over residues 340–356 (ASRTRSRSQTPNNTVTY) the composition is skewed to polar residues. A compositionally biased stretch (gly residues) spans 445–454 (GRGGSGGGSS). Over residues 455–507 (SGSSSSSSSSSSSSSSSSSSSSPSSSSGGESSETSSDLFEGSNEGSSSSGSSG) the composition is skewed to low complexity. The RING-type zinc-finger motif lies at 570 to 611 (CSVCITEYTEGNKLRKLPCSHEYHVHCIDRWLSENSTCPICR). The short motif at 621–624 (ESVV) is the PDZ-binding element.

The protein belongs to the RNF12 family. In terms of assembly, interacts with LIM/homeobox factors such as LHX3. Interacts with LDB1, LDB2 and SIN3A. Interacts with LIMK1. Interacts (via N-terminus) with TERF1. Interacts (via C-terminus) with ESR1. Expressed in many tissues.

The protein resides in the nucleus. It catalyses the reaction S-ubiquitinyl-[E2 ubiquitin-conjugating enzyme]-L-cysteine + [acceptor protein]-L-lysine = [E2 ubiquitin-conjugating enzyme]-L-cysteine + N(6)-ubiquitinyl-[acceptor protein]-L-lysine.. It participates in protein modification; protein ubiquitination. Functionally, E3 ubiquitin-protein ligase. Acts as a negative coregulator for LIM homeodomain transcription factors by mediating the ubiquitination and subsequent degradation of LIM cofactors LDB1 and LDB2 and by mediating the recruitment the SIN3a/histone deacetylase corepressor complex. Ubiquitination and degradation of LIM cofactors LDB1 and LDB2 allows DNA-bound LIM homeodomain transcription factors to interact with other protein partners such as RLIM. Plays a role in telomere length-mediated growth suppression by mediating the ubiquitination and degradation of TERF1. By targeting ZFP42 for degradation, acts as an activator of random inactivation of X chromosome in the embryo, a stochastic process in which one X chromosome is inactivated to minimize sex-related dosage differences of X-encoded genes in somatic cells of female placental mammals. In Homo sapiens (Human), this protein is E3 ubiquitin-protein ligase RLIM (RLIM).